A 452-amino-acid polypeptide reads, in one-letter code: UDP-N-acetylmuramoylalanine--D-glutamate ligase (452 aa).

119-125 (GSNGKTT) provides a ligand contact to ATP.

It belongs to the MurCDEF family.

Its subcellular location is the cytoplasm. It catalyses the reaction UDP-N-acetyl-alpha-D-muramoyl-L-alanine + D-glutamate + ATP = UDP-N-acetyl-alpha-D-muramoyl-L-alanyl-D-glutamate + ADP + phosphate + H(+). It participates in cell wall biogenesis; peptidoglycan biosynthesis. Cell wall formation. Catalyzes the addition of glutamate to the nucleotide precursor UDP-N-acetylmuramoyl-L-alanine (UMA). The protein is UDP-N-acetylmuramoylalanine--D-glutamate ligase of Streptococcus pyogenes serotype M6 (strain ATCC BAA-946 / MGAS10394).